The sequence spans 43 residues: Probable intron-encoded DNA endonuclease 2 (43 aa).

The protein belongs to the LAGLIDADG endonuclease family.

It localises to the mitochondrion. Mitochondrial DNA endonuclease involved in intron homing. The protein is Probable intron-encoded DNA endonuclease 2 (hegI2) of Mycosarcoma maydis (Corn smut fungus).